A 124-amino-acid chain; its full sequence is Large ribosomal subunit protein bL12 (124 aa).

The protein belongs to the bacterial ribosomal protein bL12 family. Homodimer. Part of the ribosomal stalk of the 50S ribosomal subunit. Forms a multimeric L10(L12)X complex, where L10 forms an elongated spine to which 2 to 4 L12 dimers bind in a sequential fashion. Binds GTP-bound translation factors.

Forms part of the ribosomal stalk which helps the ribosome interact with GTP-bound translation factors. Is thus essential for accurate translation. This Desulforamulus reducens (strain ATCC BAA-1160 / DSM 100696 / MI-1) (Desulfotomaculum reducens) protein is Large ribosomal subunit protein bL12.